The primary structure comprises 690 residues: UvrABC system protein C (690 aa).

The GIY-YIG domain maps to Thr-15 to Val-94. The UVR domain maps to Glu-207–Ser-242.

It belongs to the UvrC family. As to quaternary structure, interacts with UvrB in an incision complex.

It is found in the cytoplasm. Functionally, the UvrABC repair system catalyzes the recognition and processing of DNA lesions. UvrC both incises the 5' and 3' sides of the lesion. The N-terminal half is responsible for the 3' incision and the C-terminal half is responsible for the 5' incision. The polypeptide is UvrABC system protein C (Corynebacterium jeikeium (strain K411)).